We begin with the raw amino-acid sequence, 312 residues long: Pre-mRNA-splicing factor 38A (312 aa).

The segment at 1–179 (MANRTVKDAH…VLEETEQLDP (179 aa)) is N-terminal protein interaction domain. The tract at residues 180-312 (RVSALEEDMD…SHKKSRRGNE (133 aa)) is disordered. Acidic residues predominate over residues 184-201 (LEEDMDDVESSEEEEDDD). A compositionally biased stretch (basic and acidic residues) spans 202–223 (EKGRDPSPEHHRRNYRDLDRPR). Composition is skewed to basic residues over residues 224–294 (RSPS…RSHS) and 301–312 (KKSHKKSRRGNE).

The protein belongs to the PRP38 family. Component of the spliceosome B complex.

The protein localises to the nucleus. Involved in pre-mRNA splicing as a component of the spliceosome. The sequence is that of Pre-mRNA-splicing factor 38A (prpf38a) from Xenopus laevis (African clawed frog).